Reading from the N-terminus, the 142-residue chain is Large ribosomal subunit protein uL11 (142 aa).

This sequence belongs to the universal ribosomal protein uL11 family. Part of the ribosomal stalk of the 50S ribosomal subunit. Interacts with L10 and the large rRNA to form the base of the stalk. L10 forms an elongated spine to which L12 dimers bind in a sequential fashion forming a multimeric L10(L12)X complex. One or more lysine residues are methylated.

In terms of biological role, forms part of the ribosomal stalk which helps the ribosome interact with GTP-bound translation factors. The sequence is that of Large ribosomal subunit protein uL11 from Stenotrophomonas maltophilia (strain R551-3).